Here is a 121-residue protein sequence, read N- to C-terminus: Large ribosomal subunit protein uL18 (121 aa).

This sequence belongs to the universal ribosomal protein uL18 family. As to quaternary structure, part of the 50S ribosomal subunit; part of the 5S rRNA/L5/L18/L25 subcomplex. Contacts the 5S and 23S rRNAs.

In terms of biological role, this is one of the proteins that bind and probably mediate the attachment of the 5S RNA into the large ribosomal subunit, where it forms part of the central protuberance. The chain is Large ribosomal subunit protein uL18 from Desulfotalea psychrophila (strain LSv54 / DSM 12343).